Consider the following 307-residue polypeptide: tRNA dimethylallyltransferase (307 aa).

6–13 (GATATGKT) contributes to the ATP binding site. 8 to 13 (TATGKT) provides a ligand contact to substrate. The segment at 31–34 (DSMM) is interaction with substrate tRNA.

The protein belongs to the IPP transferase family. As to quaternary structure, monomer. It depends on Mg(2+) as a cofactor.

It carries out the reaction adenosine(37) in tRNA + dimethylallyl diphosphate = N(6)-dimethylallyladenosine(37) in tRNA + diphosphate. In terms of biological role, catalyzes the transfer of a dimethylallyl group onto the adenine at position 37 in tRNAs that read codons beginning with uridine, leading to the formation of N6-(dimethylallyl)adenosine (i(6)A). The chain is tRNA dimethylallyltransferase from Sulfurihydrogenibium sp. (strain YO3AOP1).